We begin with the raw amino-acid sequence, 288 residues long: MKRVMLFLITNLAVVLVLSVVLNIVYAVTGMQPGSLSGLLVMAAVFGFGGAFISLMMSKGMALRSVGGMVIESPRNETEHWLLETVSRQAQQAGIGMPTVAIYDSPDINAFATGAKRDDSLVAVSTGLLHNMTRDEAEAVLAHEVSHIANGDMVTMTLMQGVVNTFVIFLSRFIANMVASNNSDEEGEGSNMMVYFAVSIALELVFGFLASFITMWYSRHREFHADAGAARLVGKEKMIAALERLKMSQESKLDGTMMAFGINGKQSLTELLMSHPPLDKRIAALRNF.

The next 2 helical transmembrane spans lie at 4-24 and 36-56; these read VMLF…VLNI and LSGL…ISLM. Histidine 143 is a binding site for Zn(2+). The active site involves glutamate 144. Zn(2+) is bound at residue histidine 147. A run of 2 helical transmembrane segments spans residues 151 to 171 and 193 to 213; these read GDMV…IFLS and MVYF…ASFI. Position 222 (glutamate 222) interacts with Zn(2+).

It belongs to the peptidase M48B family. Zn(2+) is required as a cofactor.

The protein localises to the cell inner membrane. This Vibrio vulnificus (strain YJ016) protein is Protease HtpX.